The chain runs to 221 residues: Large ribosomal subunit protein uL4 (221 aa).

Residues 56–83 (HATKTRGMVSGGGRKPWKQKGTGRARQG) are disordered.

It belongs to the universal ribosomal protein uL4 family. As to quaternary structure, part of the 50S ribosomal subunit.

One of the primary rRNA binding proteins, this protein initially binds near the 5'-end of the 23S rRNA. It is important during the early stages of 50S assembly. It makes multiple contacts with different domains of the 23S rRNA in the assembled 50S subunit and ribosome. In terms of biological role, forms part of the polypeptide exit tunnel. This chain is Large ribosomal subunit protein uL4, found in Bifidobacterium adolescentis (strain ATCC 15703 / DSM 20083 / NCTC 11814 / E194a).